The primary structure comprises 400 residues: Serine/threonine transporter SstT (400 aa).

9 consecutive transmembrane segments (helical) span residues 14 to 34 (IIIA…VTPY), 48 to 68 (SVAP…FQVG), 76 to 96 (VLLL…IASL), 136 to 156 (AISE…GLAM), 177 to 197 (IIHK…AVTF), 211 to 231 (LLAV…PILV), 285 to 305 (IPLG…VLTL), 311 to 331 (LGIH…TISA), and 349 to 371 (CSLF…IISV).

Belongs to the dicarboxylate/amino acid:cation symporter (DAACS) (TC 2.A.23) family.

The protein resides in the cell inner membrane. The enzyme catalyses L-serine(in) + Na(+)(in) = L-serine(out) + Na(+)(out). It catalyses the reaction L-threonine(in) + Na(+)(in) = L-threonine(out) + Na(+)(out). Its function is as follows. Involved in the import of serine and threonine into the cell, with the concomitant import of sodium (symport system). This Acinetobacter baumannii (strain ATCC 17978 / DSM 105126 / CIP 53.77 / LMG 1025 / NCDC KC755 / 5377) protein is Serine/threonine transporter SstT.